A 234-amino-acid chain; its full sequence is uncharacterized protein (234 aa).

The tract at residues 65 to 89 (QNANRQEGRRRGLRPSSDGNLRREN) is disordered. The RING-type zinc-finger motif lies at 185–220 (CAVCLHNKVCVLFQKCKHVITCGPCSLRIKECPVCK).

Belongs to the IIV-6 175R/332L family.

This is an uncharacterized protein from Acheta domesticus (House cricket).